A 129-amino-acid chain; its full sequence is Small ribosomal subunit protein uS9 (129 aa).

The protein belongs to the universal ribosomal protein uS9 family.

The chain is Small ribosomal subunit protein uS9 from Wolinella succinogenes (strain ATCC 29543 / DSM 1740 / CCUG 13145 / JCM 31913 / LMG 7466 / NCTC 11488 / FDC 602W) (Vibrio succinogenes).